Consider the following 382-residue polypeptide: Flap endonuclease 1-A (382 aa).

The interval 1-104 (MGIHGLAKLI…GELAKRSERR (104 aa)) is N-domain. Residue D34 participates in Mg(2+) binding. Positions 47 and 70 each coordinate DNA. Residues D86, E158, E160, D179, and D181 each contribute to the Mg(2+) site. The interval 122 to 253 (NIEKFTKRLV…KRAIDLIRQH (132 aa)) is I-domain. E158 lines the DNA pocket. DNA is bound by residues G231 and D233. D233 is a Mg(2+) binding site. Residues 336-344 (TQGRLDDFF) form an interaction with PCNA region. Residues 350–382 (VSSTKRKEAESKGSAKKKAKTGGTPAGKFKRGK) form a disordered region.

Belongs to the XPG/RAD2 endonuclease family. FEN1 subfamily. In terms of assembly, interacts with PCNA. Three molecules of fen1 bind to one PCNA trimer with each molecule binding to one PCNA monomer. PCNA stimulates the nuclease activity without altering cleavage specificity. Requires Mg(2+) as cofactor. Post-translationally, phosphorylated. Phosphorylation upon DNA damage induces relocalization to the nuclear plasma.

It is found in the nucleus. It localises to the nucleolus. Its subcellular location is the nucleoplasm. The protein resides in the mitochondrion. In terms of biological role, structure-specific nuclease with 5'-flap endonuclease and 5'-3' exonuclease activities involved in DNA replication and repair. During DNA replication, cleaves the 5'-overhanging flap structure that is generated by displacement synthesis when DNA polymerase encounters the 5'-end of a downstream Okazaki fragment. It enters the flap from the 5'-end and then tracks to cleave the flap base, leaving a nick for ligation. Also involved in the long patch base excision repair (LP-BER) pathway, by cleaving within the apurinic/apyrimidinic (AP) site-terminated flap. Acts as a genome stabilization factor that prevents flaps from equilibrating into structures that lead to duplications and deletions. Also possesses 5'-3' exonuclease activity on nicked or gapped double-stranded DNA, and exhibits RNase H activity. Also involved in replication and repair of rDNA and in repairing mitochondrial DNA. This is Flap endonuclease 1-A (fen1-a) from Xenopus laevis (African clawed frog).